Reading from the N-terminus, the 279-residue chain is Digeranylgeranylglyceryl phosphate synthase (279 aa).

Transmembrane regions (helical) follow at residues 27–47 (LIATGTLTPPSLLLAVIVALI), 90–110 (FVGGIAIATLTTTLCLAIAII), 127–147 (VLGNVAVAYLAGSVFLFGGAF), 199–219 (TGIFAFACACGAVAASLLPFG), 222–242 (WGLFYLAGIAVVDLVILFGAF), and 259–279 (TSILRAGMFAALAVFAIAAVI).

This sequence belongs to the UbiA prenyltransferase family. DGGGP synthase subfamily. It depends on Mg(2+) as a cofactor.

The protein localises to the cell membrane. The enzyme catalyses sn-3-O-(geranylgeranyl)glycerol 1-phosphate + (2E,6E,10E)-geranylgeranyl diphosphate = 2,3-bis-O-(geranylgeranyl)-sn-glycerol 1-phosphate + diphosphate. Its pathway is membrane lipid metabolism; glycerophospholipid metabolism. Its function is as follows. Prenyltransferase that catalyzes the transfer of the geranylgeranyl moiety of geranylgeranyl diphosphate (GGPP) to the C2 hydroxyl of (S)-3-O-geranylgeranylglyceryl phosphate (GGGP). This reaction is the second ether-bond-formation step in the biosynthesis of archaeal membrane lipids. The sequence is that of Digeranylgeranylglyceryl phosphate synthase from Methanoculleus marisnigri (strain ATCC 35101 / DSM 1498 / JR1).